Reading from the N-terminus, the 1243-residue chain is Serine/threonine-protein kinase/endoribonuclease IRE1 (1243 aa).

Positions Met-1–Ala-35 are cleaved as a signal peptide. At Gln-36 to Asn-585 the chain is on the lumenal side. 2 disordered regions span residues His-70–Tyr-132 and Gln-149–Ser-172. Positions Pro-73–Asn-85 are enriched in basic and acidic residues. Residues Gln-90–His-99 are compositionally biased toward polar residues. A compositionally biased stretch (low complexity) spans Ser-163–Ser-172. Asn-226, Asn-470, and Asn-554 each carry an N-linked (GlcNAc...) asparagine glycan. A helical membrane pass occupies residues Ser-586–Tyr-606. The Cytoplasmic portion of the chain corresponds to Asn-607–Leu-1243. A disordered region spans residues Gly-638–Thr-765. Residues Pro-650–Gln-660 are compositionally biased toward low complexity. The segment covering Glu-674–Ser-693 has biased composition (basic and acidic residues). Residues Lys-732–Gly-749 are compositionally biased toward basic residues. Residues Val-809–Phe-1105 enclose the Protein kinase domain. Residues Leu-815–Val-823 and Lys-837 contribute to the ATP site. Residues Ser-819, Lys-837, Glu-881, and Cys-883 each contribute to the ADP site. Asp-931 serves as the catalytic Proton acceptor. Asn-936 and Asp-953 together coordinate Mg(2+). The region spanning Pro-1108–Pro-1240 is the KEN domain.

The protein belongs to the protein kinase superfamily. Ser/Thr protein kinase family. It depends on Mg(2+) as a cofactor. In terms of processing, autophosphorylated mainly on serine residues; phosphorylation enables nucleotide binding by the active site.

It is found in the endoplasmic reticulum membrane. It catalyses the reaction L-seryl-[protein] + ATP = O-phospho-L-seryl-[protein] + ADP + H(+). It carries out the reaction L-threonyl-[protein] + ATP = O-phospho-L-threonyl-[protein] + ADP + H(+). In terms of biological role, senses unfolded proteins in the lumen of the endoplasmic reticulum via its N-terminal domain which leads to enzyme auto-activation. The active endoribonuclease domain splices precursor mRNAs to produce their mature form which then induces transcription of UPR target genes. The sequence is that of Serine/threonine-protein kinase/endoribonuclease IRE1 from Hypocrea jecorina (strain QM6a) (Trichoderma reesei).